The following is a 201-amino-acid chain: Cell division protein SepF (201 aa).

Positions 1–94 (MALKDLFSGF…TTSKNNARNV (94 aa)) are disordered. Positions 13–28 (VEEEDDELEAPPEENE) are enriched in acidic residues. Low complexity predominate over residues 35-44 (PKQQAQSQNQ). Over residues 59–88 (SIQSVPKKQSTRLQQSSGERKYQMNNTTSK) the composition is skewed to polar residues.

The protein belongs to the SepF family. In terms of assembly, homodimer. Interacts with FtsZ.

The protein resides in the cytoplasm. In terms of biological role, cell division protein that is part of the divisome complex and is recruited early to the Z-ring. Probably stimulates Z-ring formation, perhaps through the cross-linking of FtsZ protofilaments. Its function overlaps with FtsA. This chain is Cell division protein SepF, found in Staphylococcus saprophyticus subsp. saprophyticus (strain ATCC 15305 / DSM 20229 / NCIMB 8711 / NCTC 7292 / S-41).